The chain runs to 135 residues: Protein KRTCAP2 homolog (135 aa).

The next 4 membrane-spanning stretches (helical) occupy residues 1 to 21 (MAVSSGTSGMLATCLFMLLFA), 35 to 55 (PMAIVGGFLGSVLFILILTAI), 69 to 89 (TKLIPEVVIALVIAMAASGMV), and 93 to 113 (CITTCLIFSIVALYYVSRISI).

It belongs to the KRTCAP2 family. In terms of assembly, component of the oligosaccharyltransferase (OST) complex.

Its subcellular location is the membrane. In terms of biological role, subunit of the oligosaccharyl transferase (OST) complex that catalyzes the initial transfer of a defined glycan (Glc(3)Man(9)GlcNAc(2) in eukaryotes) from the lipid carrier dolichol-pyrophosphate to an asparagine residue within an Asn-X-Ser/Thr consensus motif in nascent polypeptide chains, the first step in protein N-glycosylation. N-glycosylation occurs cotranslationally and the complex associates with the Sec61 complex at the channel-forming translocon complex that mediates protein translocation across the endoplasmic reticulum (ER). All subunits are required for a maximal enzyme activity. This is Protein KRTCAP2 homolog from Ixodes scapularis (Black-legged tick).